The sequence spans 335 residues: 4-hydroxy-3-methylbut-2-enyl diphosphate reductase 2 (335 aa).

Cys-37 contributes to the [4Fe-4S] cluster binding site. Residues His-66 and His-99 each contribute to the (2E)-4-hydroxy-3-methylbut-2-enyl diphosphate site. Residues His-66 and His-99 each contribute to the dimethylallyl diphosphate site. His-66 and His-99 together coordinate isopentenyl diphosphate. Cys-121 serves as a coordination point for [4Fe-4S] cluster. His-149 is a binding site for (2E)-4-hydroxy-3-methylbut-2-enyl diphosphate. Dimethylallyl diphosphate is bound at residue His-149. His-149 provides a ligand contact to isopentenyl diphosphate. Glu-151 acts as the Proton donor in catalysis. Thr-189 is a binding site for (2E)-4-hydroxy-3-methylbut-2-enyl diphosphate. Cys-219 serves as a coordination point for [4Fe-4S] cluster. Residues Ser-247, Ser-248, Asn-249, and Ser-292 each contribute to the (2E)-4-hydroxy-3-methylbut-2-enyl diphosphate site. Dimethylallyl diphosphate-binding residues include Ser-247, Ser-248, Asn-249, and Ser-292. Positions 247, 248, 249, and 292 each coordinate isopentenyl diphosphate.

Belongs to the IspH family. The cofactor is [4Fe-4S] cluster.

It carries out the reaction isopentenyl diphosphate + 2 oxidized [2Fe-2S]-[ferredoxin] + H2O = (2E)-4-hydroxy-3-methylbut-2-enyl diphosphate + 2 reduced [2Fe-2S]-[ferredoxin] + 2 H(+). It catalyses the reaction dimethylallyl diphosphate + 2 oxidized [2Fe-2S]-[ferredoxin] + H2O = (2E)-4-hydroxy-3-methylbut-2-enyl diphosphate + 2 reduced [2Fe-2S]-[ferredoxin] + 2 H(+). It functions in the pathway isoprenoid biosynthesis; dimethylallyl diphosphate biosynthesis; dimethylallyl diphosphate from (2E)-4-hydroxy-3-methylbutenyl diphosphate: step 1/1. It participates in isoprenoid biosynthesis; isopentenyl diphosphate biosynthesis via DXP pathway; isopentenyl diphosphate from 1-deoxy-D-xylulose 5-phosphate: step 6/6. In terms of biological role, catalyzes the conversion of 1-hydroxy-2-methyl-2-(E)-butenyl 4-diphosphate (HMBPP) into a mixture of isopentenyl diphosphate (IPP) and dimethylallyl diphosphate (DMAPP). Acts in the terminal step of the DOXP/MEP pathway for isoprenoid precursor biosynthesis. Has a higher activity compared with LytB2. Is essential for M.tuberculosis growth in vitro. This is 4-hydroxy-3-methylbut-2-enyl diphosphate reductase 2 from Mycobacterium tuberculosis (strain ATCC 25618 / H37Rv).